A 141-amino-acid polypeptide reads, in one-letter code: Nucleoside triphosphatase NudI (141 aa).

In terms of domain architecture, Nudix hydrolase spans 1 to 141; the sequence is MRQRTIVCPL…RHTLALKGLL (141 aa). A Nudix box motif is present at residues 38–59; the sequence is GGVEPGERIEEALRREIREELG.

This sequence belongs to the Nudix hydrolase family. NudI subfamily. Monomer. Mg(2+) serves as cofactor.

It carries out the reaction a ribonucleoside 5'-triphosphate + H2O = a ribonucleoside 5'-phosphate + diphosphate + H(+). The catalysed reaction is a 2'-deoxyribonucleoside 5'-triphosphate + H2O = a 2'-deoxyribonucleoside 5'-phosphate + diphosphate + H(+). The enzyme catalyses dUTP + H2O = dUMP + diphosphate + H(+). It catalyses the reaction dTTP + H2O = dTMP + diphosphate + H(+). It carries out the reaction dCTP + H2O = dCMP + diphosphate + H(+). Catalyzes the hydrolysis of nucleoside triphosphates, with a preference for pyrimidine deoxynucleoside triphosphates (dUTP, dTTP and dCTP). This chain is Nucleoside triphosphatase NudI, found in Salmonella paratyphi B (strain ATCC BAA-1250 / SPB7).